We begin with the raw amino-acid sequence, 536 residues long: Cytochrome P450 monooxygenase pbrC (536 aa).

A helical membrane pass occupies residues Val20–Ile39. A heme-binding site is contributed by Cys479.

Belongs to the cytochrome P450 family. Heme serves as cofactor.

It localises to the membrane. Its pathway is secondary metabolite biosynthesis; terpenoid biosynthesis. Functionally, cytochrome P450 monooxygenase; part of the gene cluster that mediates the biosynthesis of the sesquiterpenoid aspterric acid (AA), an inhibitor of dihydroxy-acid dehydratase (DHAD) effective as an herbicide. PbrC catalyzes the third and last step within the pathway and converts the alpha-epoxy carboxylate intermediate produced by the cytochrome P450 monooxygenase pbrB from (-)daucane into the tricyclic aspterric acid. The protein is Cytochrome P450 monooxygenase pbrC of Penicillium brasilianum.